We begin with the raw amino-acid sequence, 77 residues long: Large ribosomal subunit protein eL20 (77 aa).

This sequence belongs to the eukaryotic ribosomal protein eL20 family. In terms of assembly, part of the 50S ribosomal subunit. Binds 23S rRNA.

The chain is Large ribosomal subunit protein eL20 from Thermococcus kodakarensis (strain ATCC BAA-918 / JCM 12380 / KOD1) (Pyrococcus kodakaraensis (strain KOD1)).